The following is a 293-amino-acid chain: Probable endonuclease 4 (293 aa).

Positions 77, 118, 153, 187, 190, 221, 234, 236, and 266 each coordinate Zn(2+).

The protein belongs to the AP endonuclease 2 family. Zn(2+) is required as a cofactor.

The catalysed reaction is Endonucleolytic cleavage to 5'-phosphooligonucleotide end-products.. Its function is as follows. Endonuclease IV plays a role in DNA repair. It cleaves phosphodiester bonds at apurinic or apyrimidinic (AP) sites, generating a 3'-hydroxyl group and a 5'-terminal sugar phosphate. The protein is Probable endonuclease 4 of Mesoplasma florum (strain ATCC 33453 / NBRC 100688 / NCTC 11704 / L1) (Acholeplasma florum).